The following is a 557-amino-acid chain: Transmembrane protein 209 (557 aa).

The chain crosses the membrane as a helical span at residues 28–48; the sequence is VVLAWGLLNVSLAGMIYTEMT. Asn57 carries N-linked (GlcNAc...) asparagine glycosylation. Residues 60–80 form a helical membrane-spanning segment; sequence YWPLWYIELALASLFSLNALF. Disordered regions lie at residues 108 to 156 and 194 to 232; these read PYSS…KFSP and YSSS…TDKE. Residues 125 to 140 are compositionally biased toward polar residues; the sequence is VPASTPSPSMQGQNVL. Low complexity-rich tracts occupy residues 141-156, 194-205, and 219-228; these read SYSP…KFSP, YSSSPGSSQYPS, and RSSPSTYSSP. 2 N-linked (GlcNAc...) asparagine glycosylation sites follow: Asn273 and Asn343.

It localises to the membrane. It is found in the nucleus envelope. Its subcellular location is the golgi apparatus. The protein localises to the cytoplasm. In Xenopus tropicalis (Western clawed frog), this protein is Transmembrane protein 209 (tmem209).